We begin with the raw amino-acid sequence, 185 residues long: Probable chorismate pyruvate-lyase (185 aa).

Positions 75, 113, and 174 each coordinate substrate.

The protein belongs to the UbiC family.

The protein resides in the cytoplasm. The enzyme catalyses chorismate = 4-hydroxybenzoate + pyruvate. It functions in the pathway cofactor biosynthesis; ubiquinone biosynthesis. Functionally, removes the pyruvyl group from chorismate, with concomitant aromatization of the ring, to provide 4-hydroxybenzoate (4HB) for the ubiquinone pathway. In Aromatoleum aromaticum (strain DSM 19018 / LMG 30748 / EbN1) (Azoarcus sp. (strain EbN1)), this protein is Probable chorismate pyruvate-lyase.